A 144-amino-acid chain; its full sequence is Putative 2'-deoxynucleoside 5'-phosphate N-hydrolase 1 (144 aa).

Residues Tyr-7–Arg-13, Tyr-22, His-39, Glu-83, and Ser-107–Met-109 each bind substrate.

Belongs to the 2'-deoxynucleoside 5'-phosphate N-hydrolase 1 family. Monomer and homodimer.

The protein localises to the cytoplasm. Its subcellular location is the nucleus. It catalyses the reaction a pyrimidine 2'-deoxyribonucleoside 5'-phosphate + H2O = a pyrimidine nucleobase + 2-deoxy-D-ribose 5-phosphate. The enzyme catalyses a purine 2'-deoxyribonucleoside 5'-phosphate + H2O = a purine nucleobase + 2-deoxy-D-ribose 5-phosphate. Functionally, catalyzes the cleavage of the N-glycosidic bond of deoxyribonucleoside 5'-monophosphates to yield deoxyribose 5-phosphate and a purine or pyrimidine base. The sequence is that of Putative 2'-deoxynucleoside 5'-phosphate N-hydrolase 1 from Trichoplax adhaerens (Trichoplax reptans).